Here is a 182-residue protein sequence, read N- to C-terminus: UPF0254 protein MK0012 (182 aa).

The protein belongs to the UPF0254 family.

The sequence is that of UPF0254 protein MK0012 from Methanopyrus kandleri (strain AV19 / DSM 6324 / JCM 9639 / NBRC 100938).